A 185-amino-acid polypeptide reads, in one-letter code: Peptidyl-tRNA hydrolase (185 aa).

Position 14 (Y14) interacts with tRNA. The Proton acceptor role is filled by H19. TRNA-binding residues include Y65, N67, and N113.

The protein belongs to the PTH family. Monomer.

It localises to the cytoplasm. The catalysed reaction is an N-acyl-L-alpha-aminoacyl-tRNA + H2O = an N-acyl-L-amino acid + a tRNA + H(+). Functionally, hydrolyzes ribosome-free peptidyl-tRNAs (with 1 or more amino acids incorporated), which drop off the ribosome during protein synthesis, or as a result of ribosome stalling. Catalyzes the release of premature peptidyl moieties from peptidyl-tRNA molecules trapped in stalled 50S ribosomal subunits, and thus maintains levels of free tRNAs and 50S ribosomes. The protein is Peptidyl-tRNA hydrolase of Rickettsia prowazekii (strain Madrid E).